Reading from the N-terminus, the 186-residue chain is Elongation factor P (186 aa).

The protein belongs to the elongation factor P family.

Its subcellular location is the cytoplasm. It functions in the pathway protein biosynthesis; polypeptide chain elongation. Its function is as follows. Involved in peptide bond synthesis. Stimulates efficient translation and peptide-bond synthesis on native or reconstituted 70S ribosomes in vitro. Probably functions indirectly by altering the affinity of the ribosome for aminoacyl-tRNA, thus increasing their reactivity as acceptors for peptidyl transferase. In Prochlorococcus marinus (strain MIT 9215), this protein is Elongation factor P.